A 127-amino-acid chain; its full sequence is Anti-adapter protein IraD (127 aa).

It belongs to the GpW/Gp25 family. IraD subfamily. In terms of assembly, interacts with RssB.

The protein resides in the cytoplasm. In terms of biological role, inhibits RpoS proteolysis by regulating RssB activity, thereby increasing the stability of the sigma stress factor RpoS during oxidative stress. Its effect on RpoS stability is due to its interaction with RssB, which probably blocks the interaction of RssB with RpoS, and the consequent delivery of the RssB-RpoS complex to the ClpXP protein degradation pathway. In Escherichia coli (strain SMS-3-5 / SECEC), this protein is Anti-adapter protein IraD.